The chain runs to 1132 residues: Mis18-binding protein 1 (1132 aa).

Lysine 7 participates in a covalent cross-link: Glycyl lysine isopeptide (Lys-Gly) (interchain with G-Cter in SUMO2). A Phosphoserine modification is found at serine 9. Lysine 65 is covalently cross-linked (Glycyl lysine isopeptide (Lys-Gly) (interchain with G-Cter in SUMO2)). 5 positions are modified to phosphoserine: serine 110, serine 131, serine 135, serine 172, and serine 192. The interval leucine 123 to glutamate 154 is disordered. Residues proline 130 to proline 150 show a composition bias toward polar residues. Glycyl lysine isopeptide (Lys-Gly) (interchain with G-Cter in SUMO2) cross-links involve residues lysine 211 and lysine 262. Residue serine 299 is modified to Phosphoserine. Positions serine 306–leucine 332 are disordered. The residue at position 365 (serine 365) is a Phosphoserine. Positions valine 383–glutamate 469 constitute an SANTA domain. The disordered stretch occupies residues glutamate 482 to glutamine 518. Residues serine 497–glutamine 513 are compositionally biased toward basic and acidic residues. Glycyl lysine isopeptide (Lys-Gly) (interchain with G-Cter in SUMO2) cross-links involve residues lysine 534, lysine 612, lysine 639, and lysine 647. Threonine 653 carries the phosphothreonine modification. Glycyl lysine isopeptide (Lys-Gly) (interchain with G-Cter in SUMO2) cross-links involve residues lysine 727 and lysine 742. Residues histidine 765–glutamate 798 form a disordered region. Phosphoserine is present on residues serine 772 and serine 773. Basic and acidic residues predominate over residues glutamate 779–lysine 790. At threonine 821 the chain carries Phosphothreonine. Serine 824 carries the phosphoserine modification. Residue lysine 840 forms a Glycyl lysine isopeptide (Lys-Gly) (interchain with G-Cter in SUMO2) linkage. Serine 860 carries the phosphoserine modification. One can recognise an SANT domain in the interval isoleucine 875 to glycine 930. Lysine 899 participates in a covalent cross-link: Glycyl lysine isopeptide (Lys-Gly) (interchain with G-Cter in SUMO2). Residues methionine 923–glutamine 957 are disordered. A compositionally biased stretch (basic residues) spans glycine 930 to alanine 941. Glycyl lysine isopeptide (Lys-Gly) (interchain with G-Cter in SUMO2) cross-links involve residues lysine 956, lysine 964, and lysine 983. The residue at position 1008 (serine 1008) is a Phosphoserine. Residue lysine 1079 forms a Glycyl lysine isopeptide (Lys-Gly) (interchain with G-Cter in SUMO2) linkage. Serine 1086 is modified (phosphoserine). 2 positions are modified to phosphothreonine: threonine 1087 and threonine 1089. Serine 1104 and serine 1116 each carry phosphoserine.

In terms of assembly, interacts with SP1. Interacts with MIS18A. Identified in a complex containing MIS18A, OIP5/MIS18B, MIS18BP1, RBBP7 and RBBP4. Interacts with KAT7/HBO1. Interacts (via N-terminus) with FLNA (via N-terminus).

Its subcellular location is the nucleus. The protein resides in the chromosome. It localises to the centromere. Its function is as follows. Required for recruitment of CENPA to centromeres and normal chromosome segregation during mitosis. The protein is Mis18-binding protein 1 (MIS18BP1) of Homo sapiens (Human).